Reading from the N-terminus, the 520-residue chain is Protein root UVB sensitive 4 (520 aa).

Helical transmembrane passes span 275–295 (IQTV…NMLF) and 301–321 (LQAC…LLGI).

Belongs to the RUS1 family.

The protein resides in the membrane. This chain is Protein root UVB sensitive 4, found in Arabidopsis thaliana (Mouse-ear cress).